Here is a 420-residue protein sequence, read N- to C-terminus: Glucose-1-phosphate adenylyltransferase (420 aa).

Residues Tyr-107, Gly-172, 187 to 188 (EK), and Ser-205 contribute to the alpha-D-glucose 1-phosphate site.

Belongs to the bacterial/plant glucose-1-phosphate adenylyltransferase family. Homotetramer.

The catalysed reaction is alpha-D-glucose 1-phosphate + ATP + H(+) = ADP-alpha-D-glucose + diphosphate. The protein operates within glycan biosynthesis; glycogen biosynthesis. Functionally, involved in the biosynthesis of ADP-glucose, a building block required for the elongation reactions to produce glycogen. Catalyzes the reaction between ATP and alpha-D-glucose 1-phosphate (G1P) to produce pyrophosphate and ADP-Glc. This is Glucose-1-phosphate adenylyltransferase from Rhizobium etli (strain ATCC 51251 / DSM 11541 / JCM 21823 / NBRC 15573 / CFN 42).